The chain runs to 587 residues: Pentatricopeptide repeat-containing protein OGR1, mitochondrial (587 aa).

A mitochondrion-targeting transit peptide spans 1–30; it reads MSVSAAARHLESLLPRLASLRHYLQFHARL. 8 PPR repeats span residues 145-179, 200-203, 217-251, 252-286, 287-315, 319-349, 351-381, and 383-417; these read DVRL…DVAT, FHRL, NEVT…GLDR, NVRV…DQTL, VSYN…MPTR, DGVT…MRVA, NMKH…MPFP, and DIVL…GSNV. Residues 386-461 form a type E motif region; it reads LWQTLLGAAK…VPGFSYTEID (76 aa). The type E(+) motif stretch occupies residues 462 to 492; that stretch reads GVMHKFINGDKEHPRWQEIYRALEDIVSRIS. Residues 493–587 are type DYW motif; the sequence is ELGYEPETSN…DGQCSCRDYW (95 aa).

The protein resides in the mitochondrion. Its function is as follows. Involved in multiple sites RNA editing events in mitochondria. Essential for C-to-U RNA editing at seven specific sites of nad2, nad4, cox2, cox3 and ccmC transcripts, all coding for proteins involved in the mitochondrial electron transport chain coupled to ATP generation. Required for normal growth and development. The sequence is that of Pentatricopeptide repeat-containing protein OGR1, mitochondrial from Oryza sativa subsp. japonica (Rice).